We begin with the raw amino-acid sequence, 339 residues long: Methylthioribose-1-phosphate isomerase (339 aa).

Residues 49–51 (RGA), Arg-86, and Gln-187 contribute to the substrate site. Asp-228 acts as the Proton donor in catalysis. 238–239 (NK) serves as a coordination point for substrate.

This sequence belongs to the eIF-2B alpha/beta/delta subunits family. MtnA subfamily.

The catalysed reaction is 5-(methylsulfanyl)-alpha-D-ribose 1-phosphate = 5-(methylsulfanyl)-D-ribulose 1-phosphate. The protein operates within amino-acid biosynthesis; L-methionine biosynthesis via salvage pathway; L-methionine from S-methyl-5-thio-alpha-D-ribose 1-phosphate: step 1/6. Its function is as follows. Catalyzes the interconversion of methylthioribose-1-phosphate (MTR-1-P) into methylthioribulose-1-phosphate (MTRu-1-P). This Cronobacter sakazakii (strain ATCC BAA-894) (Enterobacter sakazakii) protein is Methylthioribose-1-phosphate isomerase.